A 321-amino-acid chain; its full sequence is Aspartate carbamoyltransferase catalytic subunit (321 aa).

Arginine 64 and threonine 65 together coordinate carbamoyl phosphate. Lysine 92 contacts L-aspartate. The carbamoyl phosphate site is built by arginine 114, histidine 144, and glutamine 147. Positions 177 and 232 each coordinate L-aspartate. The carbamoyl phosphate site is built by glycine 273 and proline 274.

It belongs to the aspartate/ornithine carbamoyltransferase superfamily. ATCase family. Heterododecamer (2C3:3R2) of six catalytic PyrB chains organized as two trimers (C3), and six regulatory PyrI chains organized as three dimers (R2).

The catalysed reaction is carbamoyl phosphate + L-aspartate = N-carbamoyl-L-aspartate + phosphate + H(+). The protein operates within pyrimidine metabolism; UMP biosynthesis via de novo pathway; (S)-dihydroorotate from bicarbonate: step 2/3. Functionally, catalyzes the condensation of carbamoyl phosphate and aspartate to form carbamoyl aspartate and inorganic phosphate, the committed step in the de novo pyrimidine nucleotide biosynthesis pathway. The protein is Aspartate carbamoyltransferase catalytic subunit of Alkalilimnicola ehrlichii (strain ATCC BAA-1101 / DSM 17681 / MLHE-1).